The sequence spans 64 residues: Large ribosomal subunit protein bL35 (64 aa).

Polar residues predominate over residues 1 to 10; the sequence is MPKMKTNSAA. Residues 1-64 are disordered; sequence MPKMKTNSAA…SKNMKKLLGR (64 aa).

This sequence belongs to the bacterial ribosomal protein bL35 family.

The sequence is that of Large ribosomal subunit protein bL35 from Bifidobacterium adolescentis (strain ATCC 15703 / DSM 20083 / NCTC 11814 / E194a).